The sequence spans 244 residues: Guanine nucleotide exchange factor rei-1 (244 aa).

Coiled-coil stretches lie at residues 6–39 (DQLISIRKQLENLNNATDDINSYEMKLETVKKQF) and 81–144 (VQQA…KAEK). The tract at residues 221 to 244 (DQIHQERSSQSSLAPSSDAESDSS) is disordered. Positions 228-238 (SSQSSLAPSSD) are enriched in low complexity.

This sequence belongs to the SH3BP5 family. Homodimer, tetramer and multimer. Interacts with rab-11.1. Binds preferentially to the GDP-bound form of rab-11.1. Expressed in germ cells.

It localises to the cytoplasmic granule. The protein resides in the golgi apparatus membrane. In terms of biological role, guanine nucleotide exchange factor for Rab GTPase Rab-11.1. Spatially and temporally regulates the distribution of Rab-11.1 to target membranes during embryogenesis. Plays a role in cytokinesis, probably by targeting rab-11.1 to the cleavage furrows. The polypeptide is Guanine nucleotide exchange factor rei-1 (Caenorhabditis elegans).